The sequence spans 109 residues: uncharacterized protein (109 aa).

The tract at residues 1–26 (MTPRSLPRYGNSSRRKSFPMHRPSNV) is disordered.

This is an uncharacterized protein from Mycobacterium bovis (strain ATCC BAA-935 / AF2122/97).